We begin with the raw amino-acid sequence, 381 residues long: Opsin Rh2 (381 aa).

At 1-56 the chain is on the extracellular side; it reads MERSHLPETPFDLAHSGPRFQAQSSGNGSVLDNVLPDMAHLVNPYWSRFAPMDPMM. N-linked (GlcNAc...) asparagine glycosylation is present at asparagine 27. The helical transmembrane segment at 57–81 threads the bilayer; that stretch reads SKILGLFTLAIMIISCCGNGVVVYI. Residues 82-93 are Cytoplasmic-facing; that stretch reads FGGTKSLRTPAN. The helical transmembrane segment at 94–119 threads the bilayer; the sequence is LLVLNLAFSDFCMMASQSPVMIINFY. Topologically, residues 120-133 are extracellular; it reads YETWVLGPLWCDIY. Cysteine 130 and cysteine 207 are joined by a disulfide. Residues 134-153 form a helical membrane-spanning segment; it reads AGCGSLFGCVSIWSMCMIAF. At 154-172 the chain is on the cytoplasmic side; it reads DRYNVIVKGINGTPMTIKT. Residues 173 to 196 traverse the membrane as a helical segment; sequence SIMKILFIWMMAVFWTVMPLIGWS. Over 197–220 the chain is Extracellular; the sequence is AYVPEGNLTACSIDYMTRMWNPRS. The helical transmembrane segment at 221 to 248 threads the bilayer; that stretch reads YLITYSLFVYYTPLFLICYSYWFIIAAV. The Cytoplasmic portion of the chain corresponds to 249–283; the sequence is AAHEKAMREQAKKMNVKSLRSSEDCDKSAEGKLAK. Residues 284–307 traverse the membrane as a helical segment; it reads VALTTISLWFMAWTPYLVICYFGL. The Extracellular segment spans residues 308–314; the sequence is FKIDGLT. A helical transmembrane segment spans residues 315–339; that stretch reads PLTTIWGATFAKTSAVYNPIVYGIS. Lysine 326 carries the N6-(retinylidene)lysine modification. Over 340 to 381 the chain is Cytoplasmic; it reads HPKYRIVLKEKCPMCVFGNTDEPKPDAPASDTETTSEADSKA. Positions 359–381 are disordered; sequence TDEPKPDAPASDTETTSEADSKA. Over residues 370–381 the composition is skewed to polar residues; it reads DTETTSEADSKA.

The protein belongs to the G-protein coupled receptor 1 family. Opsin subfamily. Post-translationally, phosphorylated on some or all of the serine and threonine residues present in the C-terminal region. In terms of tissue distribution, predominant opsin expressed in the dorsal ocelli.

It localises to the membrane. Its function is as follows. Visual pigments are the light-absorbing molecules that mediate vision. They consist of an apoprotein, opsin, covalently linked to cis-retinal. The polypeptide is Opsin Rh2 (Rh2) (Drosophila melanogaster (Fruit fly)).